Reading from the N-terminus, the 270-residue chain is Phosphonates import ATP-binding protein PhnC 2 (270 aa).

The ABC transporter domain occupies 2 to 245 (LVVEGLTCRF…IARELYDLEA (244 aa)). Position 34-41 (34-41 (GRSGAGKS)) interacts with ATP.

Belongs to the ABC transporter superfamily. Phosphonates importer (TC 3.A.1.9.1) family. The complex is composed of two ATP-binding proteins (PhnC), two transmembrane proteins (PhnE) and a solute-binding protein (PhnD).

It is found in the cell inner membrane. The enzyme catalyses phosphonate(out) + ATP + H2O = phosphonate(in) + ADP + phosphate + H(+). In terms of biological role, part of the ABC transporter complex PhnCDE involved in phosphonates import. Responsible for energy coupling to the transport system. This chain is Phosphonates import ATP-binding protein PhnC 2, found in Rhodopseudomonas palustris (strain BisA53).